The primary structure comprises 465 residues: Hexokinase-4 (465 aa).

The Hexokinase domain maps to alanine 10–alanine 454. The hexokinase small subdomain stretch occupies residues glutamate 67 to valine 203. Position 78 to 83 (aspartate 78 to asparagine 83) interacts with ATP. Residues serine 151 to phenylalanine 152, threonine 168 to lysine 169, and asparagine 204 to aspartate 205 contribute to the substrate site. A hexokinase large subdomain region spans residues asparagine 204 to glutamate 443. Threonine 228 contacts ATP. Substrate is bound by residues asparagine 231, glutamate 256, and glutamate 290. ATP contacts are provided by residues glycine 295 to lysine 296, threonine 332 to serine 336, and serine 411 to leucine 415.

This sequence belongs to the hexokinase family. Monomer. Interacts with MIDN; the interaction occurs preferentially at low glucose levels and results in inhibition of hexokinase activity. Interacts with GCKR; leading to sequestration in the nucleus. Expression is restricted to the liver and pancreatic islets (at protein level).

It localises to the cytoplasm. It is found in the nucleus. The protein resides in the mitochondrion. It carries out the reaction a D-hexose + ATP = a D-hexose 6-phosphate + ADP + H(+). The catalysed reaction is D-fructose + ATP = D-fructose 6-phosphate + ADP + H(+). The enzyme catalyses D-glucose + ATP = D-glucose 6-phosphate + ADP + H(+). It catalyses the reaction D-mannose + ATP = D-mannose 6-phosphate + ADP + H(+). It functions in the pathway carbohydrate metabolism; hexose metabolism. It participates in carbohydrate degradation; glycolysis; D-glyceraldehyde 3-phosphate and glycerone phosphate from D-glucose: step 1/4. With respect to regulation, subject to allosteric regulation. Low glucose and high fructose-6-phosphate triggers association with the inhibitor GCKR followed by sequestration in the nucleus. Functionally, catalyzes the phosphorylation of hexose, such as D-glucose, D-fructose and D-mannose, to hexose 6-phosphate (D-glucose 6-phosphate, D-fructose 6-phosphate and D-mannose 6-phosphate, respectively). Compared to other hexokinases, has a weak affinity for D-glucose, and is effective only when glucose is abundant. Mainly expressed in pancreatic beta cells and the liver and constitutes a rate-limiting step in glucose metabolism in these tissues. Since insulin secretion parallels glucose metabolism and the low glucose affinity of GCK ensures that it can change its enzymatic activity within the physiological range of glucose concentrations, GCK acts as a glucose sensor in the pancreatic beta cell. In pancreas, plays an important role in modulating insulin secretion. In liver, helps to facilitate the uptake and conversion of glucose by acting as an insulin-sensitive determinant of hepatic glucose usage. Required to provide D-glucose 6-phosphate for the synthesis of glycogen. Mediates the initial step of glycolysis by catalyzing phosphorylation of D-glucose to D-glucose 6-phosphate. The chain is Hexokinase-4 from Rattus norvegicus (Rat).